Reading from the N-terminus, the 525-residue chain is Protein kinase PINOID 2 (525 aa).

The segment at 1-27 (MANSSIFYKDNESDYESSTVGPDSSRR) is disordered. The 379-residue stretch at 87–465 (FRLLKRLGSG…SIEIKRHEFF (379 aa)) folds into the Protein kinase domain. ATP contacts are provided by residues 93–101 (LGSGDIGSV) and lysine 118. The active-site Proton acceptor is aspartate 214. One can recognise an AGC-kinase C-terminal domain in the interval 466–525 (EGVNWALIRSIKPPWVPKEETSHKTKGDNRSVNYYLPPRFMMSRKERNEPYHVSNYFDYF).

It belongs to the protein kinase superfamily. Ser/Thr protein kinase family.

It carries out the reaction L-seryl-[protein] + ATP = O-phospho-L-seryl-[protein] + ADP + H(+). The catalysed reaction is L-threonyl-[protein] + ATP = O-phospho-L-threonyl-[protein] + ADP + H(+). Functionally, serine/threonine-protein kinase involved in the regulation of auxin signaling. Plays a minor role in the regulation of cellular auxin efflux and cotyledon organogenesis. In Arabidopsis thaliana (Mouse-ear cress), this protein is Protein kinase PINOID 2 (PID2).